We begin with the raw amino-acid sequence, 369 residues long: C2 calcium-dependent domain-containing protein 4A (369 aa).

Disordered regions lie at residues 151 to 176 (PRAPGPATPAAPGCPRPPQDALARRP) and 197 to 240 (RSRR…PFPE). The span at 153–168 (APGPATPAAPGCPRPP) shows a compositional bias: pro residues. Residues 220–237 (SQSPARAPSTSPPSSRVP) show a composition bias toward low complexity. The 117-residue stretch at 253-369 (AGDALRLAAE…ELSLGALLLL (117 aa)) folds into the C2 domain.

Belongs to the C2CD4 family. Specifically expressed in endothelial cells.

The protein resides in the nucleus. Its function is as follows. May be involved in inflammatory process. May regulate cell architecture and adhesion. This chain is C2 calcium-dependent domain-containing protein 4A (C2CD4A), found in Homo sapiens (Human).